The sequence spans 313 residues: Methionyl-tRNA formyltransferase (313 aa).

Position 111-114 (111-114) interacts with (6S)-5,6,7,8-tetrahydrofolate; that stretch reads SLLP.

This sequence belongs to the Fmt family.

The enzyme catalyses L-methionyl-tRNA(fMet) + (6R)-10-formyltetrahydrofolate = N-formyl-L-methionyl-tRNA(fMet) + (6S)-5,6,7,8-tetrahydrofolate + H(+). Attaches a formyl group to the free amino group of methionyl-tRNA(fMet). The formyl group appears to play a dual role in the initiator identity of N-formylmethionyl-tRNA by promoting its recognition by IF2 and preventing the misappropriation of this tRNA by the elongation apparatus. The protein is Methionyl-tRNA formyltransferase of Mesoplasma florum (strain ATCC 33453 / NBRC 100688 / NCTC 11704 / L1) (Acholeplasma florum).